Consider the following 261-residue polypeptide: Transmembrane protein 106A (261 aa).

A helical membrane pass occupies residues 95–115 (VFLAVSICLVTSSLIIFFLFP).

The protein belongs to the TMEM106 family.

It localises to the cell membrane. Activates macrophages and polarizes them into M1-like macrophages through the activation of the MAPK and NF-kappaB signaling pathway. Upon activation, up-regulates the expression of CD80, CD86, CD69 and MHC II on macrophages, and induces the release of pro-inflammatory cytokines such as TNF, IL1B, IL6, CCL2 and nitric oxide. May play a role in inhibition of proliferation and migration. This is Transmembrane protein 106A (TMEM106A) from Bos taurus (Bovine).